The sequence spans 198 residues: Ribonuclease HII (198 aa).

In terms of domain architecture, RNase H type-2 spans 14–198 (GVIAGVDEVG…KNFAPISRAL (185 aa)). The a divalent metal cation site is built by Asp20, Glu21, and Asp112.

The protein belongs to the RNase HII family. The cofactor is Mn(2+). Mg(2+) serves as cofactor.

The protein localises to the cytoplasm. It catalyses the reaction Endonucleolytic cleavage to 5'-phosphomonoester.. Its function is as follows. Endonuclease that specifically degrades the RNA of RNA-DNA hybrids. The polypeptide is Ribonuclease HII (Wolbachia pipientis wMel).